The primary structure comprises 603 residues: Carbon catabolite repressor protein 4 homolog 2 (603 aa).

The interval 115-136 (ENNANEDDDLNRNNSAGSGSLA) is disordered. Over residues 126 to 136 (RNNSAGSGSLA) the composition is skewed to low complexity. Glu-302 serves as a coordination point for Mg(2+).

It belongs to the CCR4/nocturin family. Component of the CCR4-NOT complex, at least composed of CRR4 and CAF1 proteins. The cofactor is Mg(2+).

The protein resides in the nucleus. It localises to the cytoplasm. The enzyme catalyses Exonucleolytic cleavage of poly(A) to 5'-AMP.. In terms of biological role, acts as a catalytic component of the CCR4-NOT core complex, which in the nucleus seems to be a general transcription factor, and in the cytoplasm the major mRNA deadenylase involved in mRNA turnover. This is Carbon catabolite repressor protein 4 homolog 2 (CCR4-2) from Arabidopsis thaliana (Mouse-ear cress).